The following is a 304-amino-acid chain: Ribonuclease Z (304 aa).

Residues His64, His66, Asp68, His69, His141, Asp209, and His267 each coordinate Zn(2+). Asp68 functions as the Proton acceptor in the catalytic mechanism.

This sequence belongs to the RNase Z family. In terms of assembly, homodimer. Zn(2+) is required as a cofactor.

The catalysed reaction is Endonucleolytic cleavage of RNA, removing extra 3' nucleotides from tRNA precursor, generating 3' termini of tRNAs. A 3'-hydroxy group is left at the tRNA terminus and a 5'-phosphoryl group is left at the trailer molecule.. Functionally, zinc phosphodiesterase, which displays some tRNA 3'-processing endonuclease activity. Probably involved in tRNA maturation, by removing a 3'-trailer from precursor tRNA. The sequence is that of Ribonuclease Z from Thermoplasma volcanium (strain ATCC 51530 / DSM 4299 / JCM 9571 / NBRC 15438 / GSS1).